We begin with the raw amino-acid sequence, 243 residues long: UPF0758 protein alr2351 (243 aa).

Residues 113–235 (PIDSPVAAVA…HQSLREITTL (123 aa)) enclose the MPN domain. Zn(2+) contacts are provided by His-184, His-186, and Asp-197. The JAMM motif motif lies at 184–197 (HNHPSGNVEPSPED).

This sequence belongs to the UPF0758 family.

This chain is UPF0758 protein alr2351, found in Nostoc sp. (strain PCC 7120 / SAG 25.82 / UTEX 2576).